The chain runs to 346 residues: Probable RNA methyltransferase PA1839 (346 aa).

Glu91 functions as the Proton acceptor in the catalytic mechanism. One can recognise a Radical SAM core domain in the interval Leu94–Asp320. Cysteines 101 and 325 form a disulfide. Residues Cys108, Cys112, and Cys115 each coordinate [4Fe-4S] cluster. Residues Gly153–Glu154, Ser183, Ser206–His208, and Asn282 contribute to the S-adenosyl-L-methionine site. The S-methylcysteine intermediate role is filled by Cys325.

The protein belongs to the radical SAM superfamily. RlmN family. [4Fe-4S] cluster serves as cofactor.

It is found in the cytoplasm. The sequence is that of Probable RNA methyltransferase PA1839 from Pseudomonas aeruginosa (strain ATCC 15692 / DSM 22644 / CIP 104116 / JCM 14847 / LMG 12228 / 1C / PRS 101 / PAO1).